The primary structure comprises 433 residues: Staphylopine synthase (433 aa).

Residues threonine 9–valine 12, arginine 33, serine 37–serine 40, and aspartate 99 each bind NADP(+). The active-site Proton donor/acceptor is histidine 216.

Belongs to the staphylopine dehydrogenase family. In terms of assembly, homodimer.

The enzyme catalyses staphylopine + NADP(+) + H2O = (2S)-2-amino-4-{[(1R)-1-carboxy-2-(1H-imidazol-4-yl)ethyl]amino}butanoate + pyruvate + NADPH + H(+). In terms of biological role, catalyzes the NADPH-dependent reductive condensation of pyruvate to the intermediate formed by the adjacently encoded enzyme CntL, namely (2S)-2-amino-4-{[(1R)-1-carboxy-2-(1H-imidazol-4-yl)ethyl]amino}butanoate, leading to the production of staphylopine. This is the last step in the biosynthesis of the metallophore staphylopine, which is involved in the acquisition of nickel, cobalt, zinc, copper, and iron, and thus enables bacterial growth inside the host, where metal access is limited. Therefore, this enzyme probably contributes to staphylococcal virulence. Can use neither NADH nor alpha-ketoglutarate in place of NADPH and pyruvate, respectively. The protein is Staphylopine synthase of Staphylococcus aureus (strain Mu50 / ATCC 700699).